We begin with the raw amino-acid sequence, 664 residues long: MKRRNADCSKLRRPLKRNRITEGIYGSTFLYLKFLVVWALVLLADFVLEFRFEYLWPFWLFIRSVYDSFRYQGLAFSVFFVCVAFTSNIICLLFIPIQWLFFAASTYVWVQYVWHTERGVCLPTVSLWILFVYIEAAIRFKDLKNFHVDLCRPFAAHCIGYPVVTLGFGFKSYVSYKMRLRKQKEVQKENEFYMQLLQQALPPEQQMLQKQEKEAEEAAKGLPDMDSSILIHHNGGIPANKKLSTTLPEIEYREKGKEKDKDAKKHNLGINNNNILQPVDSKIQEIEYMENHINSKRLNNDLVGSTENLLKEDSCTASSKNYKNASGVVNSSPRSHSATNGSIPSSSSKNEKKQKCTSKSPSAHKDLMENCIPNNQLSKPDALVRLEQDIKKLKADLQASRQVEQELRSQISSLSSTERGIRSEMGQLRQENELLQNKLHNAVQMKQKDKQNISQLEKKLKAEQEARSFVEKQLMEEKKRKKLEEATAARAVAFAAASRGECTETLRNRIRELEAEGKKLTMDMKVKEDQIRELELKVQELRKYKENEKDTEVLMSALSAMQDKTQHLENSLSAETRIKLDLFSALGDAKRQLEIAQGQILQKDQEIKDLKQKIAEVMAVMPSITYSAAASPLSPVSPHYSSKFVETSPSGLDPNASVYQPLKK.

4 helical membrane-spanning segments follow: residues 28–48 (TFLYLKFLVVWALVLLADFVL), 75–95 (AFSVFFVCVAFTSNIICLLFI), 120–140 (VCLPTVSLWILFVYIEAAIRF), and 154–174 (FAAHCIGYPVVTLGFGFKSYV). Basic and acidic residues predominate over residues 253–265 (REKGKEKDKDAKK). The disordered stretch occupies residues 253 to 274 (REKGKEKDKDAKKHNLGINNNN). Serine 305 is subject to Phosphoserine. The span at 320-348 (KNYKNASGVVNSSPRSHSATNGSIPSSSS) shows a compositional bias: polar residues. Residues 320 to 367 (KNYKNASGVVNSSPRSHSATNGSIPSSSSKNEKKQKCTSKSPSAHKDL) form a disordered region. A glycan (N-linked (GlcNAc...) asparagine) is linked at asparagine 324. Serine 332 carries the phosphoserine modification. N-linked (GlcNAc...) asparagine glycosylation is found at asparagine 340 and asparagine 452. Phosphoserine occurs at positions 631 and 634. Residues 631–664 (SPLSPVSPHYSSKFVETSPSGLDPNASVYQPLKK) are disordered. Residue asparagine 655 is glycosylated (N-linked (GlcNAc...) asparagine).

The protein belongs to the macoilin family.

The protein localises to the rough endoplasmic reticulum membrane. The protein resides in the nucleus membrane. Functionally, plays a role in the regulation of neuronal activity. The polypeptide is Macoilin (MACO1) (Bos taurus (Bovine)).